We begin with the raw amino-acid sequence, 527 residues long: F-box-like/WD repeat-containing protein TBL1X (527 aa).

N-acetylserine is present on Ser-2. Residues 4–36 (TSDEVNFLVYRYLQESGFSHSAFTFGIESHISQ) form the LisH domain. In terms of domain architecture, F-box-like spans 41–86 (GTLVPPAALISILQKGLQYVEAEISINEDGTVFDGRPIESLSLIDA). Position 102 is an N6-acetyllysine (Lys-102). Residues 127–164 (TTPAAAAQQNPPKNGEATVNGEENGAHAINNHSKPMEI) form a disordered region. WD repeat units follow at residues 180–219 (GHESEVFICAWNPVSDLLASGSGDSTARIWNLNENSNGGS), 236–275 (PSNKDVTSLDWNSDGTLLATGSYDGFARIWTEDGNLASTL), 277–316 (QHKGPIFALKWNKKGNYILSAGVDKTTIIWDAHTGEAKQQ), 319–359 (FHSA…KTFQ), 360–399 (GHTNEVNAIKWDPSGMLLASCSDDMTLKIWSMKQDACVHD), 402–450 (AHSK…CIHT), 453–492 (KHQEPVYSVAFSPDGKYLASGSFDKCVHIWNTQSGSLVHS), and 494–526 (RGTGGIFEVCWNARGDKVGASASDGSVCVLDLR). Residue Lys-290 forms a Glycyl lysine isopeptide (Lys-Gly) (interchain with G-Cter in SUMO2) linkage.

It belongs to the WD repeat EBI family. Homotetramer; dimer of dimers. Component of the N-Cor repressor complex, at least composed of NCOR1, NCOR2, HDAC3, TBL1X, TBL1R, CORO2A and GPS2. Component of a E3 ubiquitin ligase complex containing UBE2D1, SIAH1, CACYBP/SIP, SKP1, APC and TBL1X. Interacts with GPS2 (when sumoylated); leading to protect GPS2 against degradation by the proteasome. Probably part of other corepressor complexes, that do not contain NCOR1 and NCOR2. Interacts with histones H2B, H3a and H4. Interacts with MECP2; recruits TBL1X to the heterochromatin foci. Interacts with USP44. As to expression, expressed in the cochlea.

Its subcellular location is the nucleus. F-box-like protein involved in the recruitment of the ubiquitin/19S proteasome complex to nuclear receptor-regulated transcription units. Plays an essential role in transcription activation mediated by nuclear receptors. Probably acts as integral component of corepressor complexes that mediates the recruitment of the 19S proteasome complex, leading to the subsequent proteasomal degradation of transcription repressor complexes, thereby allowing cofactor exchange. This chain is F-box-like/WD repeat-containing protein TBL1X (Tbl1x), found in Mus musculus (Mouse).